The primary structure comprises 261 residues: Carbonic anhydrase 1 (261 aa).

A2 carries the post-translational modification N-acetylalanine. Residues 4–261 (PDWGYDDKNG…LKGRTVRASF (258 aa)) enclose the Alpha-carbonic anhydrase domain. The active-site Proton donor/acceptor is H65. The Zn(2+) site is built by H95, H97, and H120. Residues T200 and 200 to 201 (TH) contribute to the substrate site. The interval 238–261 (NPVPIQRNNRPTQPLKGRTVRASF) is disordered.

This sequence belongs to the alpha-carbonic anhydrase family. Zn(2+) serves as cofactor.

The protein localises to the cytoplasm. It carries out the reaction hydrogencarbonate + H(+) = CO2 + H2O. The catalysed reaction is urea = cyanamide + H2O. Inhibited by acetazolamide. In terms of biological role, catalyzes the reversible hydration of carbon dioxide. Can hydrate cyanamide to urea. This chain is Carbonic anhydrase 1 (CA1), found in Macaca mulatta (Rhesus macaque).